The chain runs to 122 residues: Small ribosomal subunit protein uS13 (122 aa).

The disordered stretch occupies residues 92-122; sequence HRKQLPVRGQRTHTNARTRKGKAKPIAGKKK.

This sequence belongs to the universal ribosomal protein uS13 family. Part of the 30S ribosomal subunit. Forms a loose heterodimer with protein S19. Forms two bridges to the 50S subunit in the 70S ribosome.

Located at the top of the head of the 30S subunit, it contacts several helices of the 16S rRNA. In the 70S ribosome it contacts the 23S rRNA (bridge B1a) and protein L5 of the 50S subunit (bridge B1b), connecting the 2 subunits; these bridges are implicated in subunit movement. Contacts the tRNAs in the A and P-sites. This Methylobacterium radiotolerans (strain ATCC 27329 / DSM 1819 / JCM 2831 / NBRC 15690 / NCIMB 10815 / 0-1) protein is Small ribosomal subunit protein uS13.